The following is a 206-amino-acid chain: CMP-5'-(N-acetyl-N-hydroxy-3-aminopropyl)phosphonate hydrolase (206 aa).

In terms of domain architecture, Nudix hydrolase spans 37-166; it reads VRAPGAAIIV…RTVTSGTAIG (130 aa). A Nudix box motif is present at residues 74–95; sequence GLVDDREDPAVTAAREAEEETG. The segment covering 177–194 has biased composition (low complexity); it reads RQQPGGVQEQPGGAQQQG. Residues 177-206 are disordered; sequence RQQPGGVQEQPGGAQQQGMNESHSGRTVRG.

The protein belongs to the Nudix hydrolase family. The cofactor is Mg(2+).

The enzyme catalyses CMP-5'-(N-acetyl-N-hydroxy-3-aminopropyl)phosphonate + H2O = 3-(N-acetyl-N-hydroxy)aminopropylphosphonate + CMP + H(+). The protein operates within antibiotic biosynthesis. Functionally, nucleotide hydrolase involved in the biosynthesis of the phosphonate antibiotic FR-900098, a potent antimalarial agent that acts as an inhibitor of 1-deoxy-D-xylulose 5-phosphate reductoisomerase (DXR), the first enzyme in the nonmevalonate pathway for isoprenoid biosynthesis. Catalyzes the hydrolysis of CMP-5'-(N-acetyl-N-hydroxy-3-aminopropyl)phosphonate (CMP-5'-FR-900098) to produce CMP and the final compound FR-900098. In vitro, has broad substrate specificity and also catalyzes the hydrolysis of all the other CMP-containing intermediates within the pathway and shows low activity toward CTP. The polypeptide is CMP-5'-(N-acetyl-N-hydroxy-3-aminopropyl)phosphonate hydrolase (Streptomyces rubellomurinus (strain ATCC 31215)).